Reading from the N-terminus, the 273-residue chain is SPRY domain-containing SOCS box protein 4 (273 aa).

The interval 1–34 (MGQKLSGSLKSVEVREPALRPAKRELRGAEPGRP) is disordered. The span at 12–34 (VEVREPALRPAKRELRGAEPGRP) shows a compositional bias: basic and acidic residues. Positions 34–233 (PARLDQLLDM…MRYINGLDPE (200 aa)) constitute a B30.2/SPRY domain. The SOCS box domain occupies 234-273 (PLPLMDLCRRSIRSALGRQRLQDISSLPLPQSLKNYLQYQ).

Belongs to the SPSB family. Component of the probable ECS(SPSB4) E3 ubiquitin-protein ligase complex which contains CUL5, RNF7/RBX2, Elongin BC complex and SPSB4. Interacts with CUL5; RNF7; ELOB and ELOC. Interacts with MET. Interacts (via B30.2/SPRY domain) with PAWR; this interaction occurs in association with the Elongin BC complex. Interacts with NOS2. Interacts with EPHB2.

The protein resides in the cytoplasm. It localises to the cytosol. It participates in protein modification; protein ubiquitination. In terms of biological role, substrate recognition component of a SCF-like ECS (Elongin BC-CUL2/5-SOCS-box protein) E3 ubiquitin-protein ligase complex which mediates the ubiquitination and subsequent proteasomal degradation of target proteins. Negatively regulates nitric oxide (NO) production and limits cellular toxicity in activated macrophages by mediating the ubiquitination and proteasomal degradation of NOS2. Acts as a bridge which links NOS2 with the ECS E3 ubiquitin ligase complex components ELOC and CUL5. Diminishes EphB2-dependent cell repulsive responses by mediating the ubiquitination and degradation of EphB2/CTF2. Regulates cellular clock function by mediating the ubiquitin/proteasome-dependent degradation of the circadian transcriptional repressor NR1D1. The polypeptide is SPRY domain-containing SOCS box protein 4 (SPSB4) (Homo sapiens (Human)).